Here is a 40-residue protein sequence, read N- to C-terminus: Snaclec tokaracetin subunit alpha (40 aa).

One can recognise a C-type lectin domain in the interval aspartate 1–valine 40. Cysteine 2 and cysteine 13 are oxidised to a cystine.

The protein belongs to the snaclec family. In terms of assembly, heterodimer of subunits alpha and beta; disulfide-linked. Expressed by the venom gland.

The protein resides in the secreted. Platelet antagonist that specifically and reversibly binds to a site on platelet glycoprotein Ibalpha (GP1BA) close to or identical with the site for vWF binding. It inhibits the binding of vWF to platelets and vWF-dependent shear-induced platelet aggregation. The chain is Snaclec tokaracetin subunit alpha from Protobothrops tokarensis (Tokara habu).